Consider the following 473-residue polypeptide: MAAPAKRARVSGGSPLVAPCPSPRAARAPLPLPAGSSGGEPEGDAVAGFLRWCRRVGLELSPKVTVSRQGTVAGYGMVARESVRAGELLFAVPRSALLSPHTCSISGLLERERGALQSLSGWVPLLLALLHELQAPASPWSPYFALWPELGRLEHPMFWPEEERLRLLKGTGVPEAVEKDLVNIRSEYYSIVLPFMEAHSDLFSPSVRSLELYQQLVALVMAYSFQEPLEEDDDEKEPNSPLMVPAADILNHIANHNANLEYSADYLRMVATQPILEGHEIFNTYGQMANWQLIHMYGFAEPYPNNTDDTADIQMVTVRDAALQGTKDETEKLLVCERWDFLCKQEMVGEEGAFVIGCEEVLTEEELATTLKVLCMPAEEFRDYKERAGWGEEETEDDSLAITDIPKLQESWKRLLRNSVLLTLQTYTTDLKTDQDLLSNKEAYATLSWREQQALQVRYGQKMILHRVLELTN.

Positions 1–23 are disordered; it reads MAAPAKRARVSGGSPLVAPCPSP. A phosphoserine mark is found at Ser-14 and Ser-22. An SET domain is found at 62 to 286; it reads PKVTVSRQGT…EGHEIFNTYG (225 aa). Lys-63 is subject to N6-methylated lysine; by autocatalysis. An S-adenosyl-L-methionine-binding site is contributed by 73–75; sequence AGY. A substrate-binding site is contributed by Trp-122. Lys-179 carries the N6-methylated lysine; by autocatalysis modification. An S-adenosyl-L-methionine-binding site is contributed by Tyr-223. Substrate contacts are provided by Ser-224 and Gln-226. S-adenosyl-L-methionine is bound by residues 251-252 and Tyr-297; that span reads NH. Lys-372 is modified (N6-methylated lysine; by autocatalysis).

It belongs to the class V-like SAM-binding methyltransferase superfamily. Histone-lysine methyltransferase family. SETD6 subfamily. In terms of assembly, monomer, homodimer and homotrimer; these structures are stabilized in the presence of S-adenosyl-L-methionine (SAM). Post-translationally, automethylated.

Its subcellular location is the nucleus. It catalyses the reaction L-lysyl-[protein] + S-adenosyl-L-methionine = N(6)-methyl-L-lysyl-[protein] + S-adenosyl-L-homocysteine + H(+). The enzyme catalyses L-lysyl(8)-[histone H2AZ] + S-adenosyl-L-methionine = N(6)-methyl-L-lysyl(8)-[histone H2AZ] + S-adenosyl-L-homocysteine + H(+). In terms of biological role, protein-lysine N-methyltransferase. Monomethylates 'Lys-310' of the RELA subunit of NF-kappa-B complex, leading to down-regulation of NF-kappa-B transcription factor activity. Monomethylates 'Lys-8' of H2AZ (H2AZK8me1). Required for the maintenance of embryonic stem cell self-renewal. Methylates PAK4. This is N-lysine methyltransferase SETD6 (Setd6) from Mus musculus (Mouse).